The sequence spans 285 residues: Bifunctional protein FolD (285 aa).

NADP(+) is bound by residues 166–168 (GAS) and isoleucine 232.

It belongs to the tetrahydrofolate dehydrogenase/cyclohydrolase family. As to quaternary structure, homodimer.

It catalyses the reaction (6R)-5,10-methylene-5,6,7,8-tetrahydrofolate + NADP(+) = (6R)-5,10-methenyltetrahydrofolate + NADPH. It carries out the reaction (6R)-5,10-methenyltetrahydrofolate + H2O = (6R)-10-formyltetrahydrofolate + H(+). It functions in the pathway one-carbon metabolism; tetrahydrofolate interconversion. Its function is as follows. Catalyzes the oxidation of 5,10-methylenetetrahydrofolate to 5,10-methenyltetrahydrofolate and then the hydrolysis of 5,10-methenyltetrahydrofolate to 10-formyltetrahydrofolate. The protein is Bifunctional protein FolD of Photobacterium profundum (strain SS9).